The primary structure comprises 147 residues: Diuretic hormone 45 (147 aa).

Positions 1–26 (MMWWAVWCAAMVAGSVFTAAAPPTDS) are cleaved as a signal peptide. Residues 27–84 (IDLMQMDPSLADDESLGFAMQSLSGRYAAAPWLYLLADVSHDPQRMAEFSQSSGRARP) constitute a propeptide that is removed on maturation. Val131 carries the post-translational modification Valine amide. Residues 135–147 (GAWGEPASYLYNN) constitute a propeptide that is removed on maturation.

The protein belongs to the sauvagine/corticotropin-releasing factor/urotensin I family.

The protein resides in the secreted. Its function is as follows. Regulation of fluid secretion. This is Diuretic hormone 45 (dh45) from Bombyx mori (Silk moth).